A 586-amino-acid chain; its full sequence is YTH domain-containing family protein 2 (586 aa).

3 disordered regions span residues 98–128 (LKEK…QPVQ), 141–181 (SQDQ…KESP), and 301–464 (QGLA…PLVS). Polar residues-rich tracts occupy residues 107-128 (ALRQ…QPVQ), 169-181 (TLPT…KESP), and 352-368 (SSQA…TDIQ). Residues 398–418 (CARRHRSSSPRGRSGSHKSRR) are compositionally biased toward basic residues. Residues 421 to 436 (TDSPVSRSTTKSTPSR) show a composition bias toward polar residues. Residues 435 to 576 (SRARQPGHRD…YCGRDLLRLM (142 aa)) form the YTH domain. The segment covering 441–458 (GHRDYREYRDDRNRDTKP) has biased composition (basic and acidic residues).

This sequence belongs to the YTHDF family. YTHDF1 subfamily.

Its function is as follows. Specifically recognizes and binds N6-methyladenosine (m6A)-containing mRNAs, and regulates their stability. M6A is a modification present at internal sites of mRNAs and some non-coding RNAs and plays a role in mRNA stability and processing. Plays a role in pathogenicity towards plant host. The polypeptide is YTH domain-containing family protein 2 (Pyricularia oryzae (strain 70-15 / ATCC MYA-4617 / FGSC 8958) (Rice blast fungus)).